We begin with the raw amino-acid sequence, 1382 residues long: DNA-directed RNA polymerase subunit beta'' (1382 aa).

Positions 224, 294, 301, and 304 each coordinate Zn(2+).

It belongs to the RNA polymerase beta' chain family. RpoC2 subfamily. In terms of assembly, in plastids the minimal PEP RNA polymerase catalytic core is composed of four subunits: alpha, beta, beta', and beta''. When a (nuclear-encoded) sigma factor is associated with the core the holoenzyme is formed, which can initiate transcription. It depends on Zn(2+) as a cofactor.

The protein localises to the plastid. It is found in the chloroplast. It carries out the reaction RNA(n) + a ribonucleoside 5'-triphosphate = RNA(n+1) + diphosphate. Functionally, DNA-dependent RNA polymerase catalyzes the transcription of DNA into RNA using the four ribonucleoside triphosphates as substrates. The polypeptide is DNA-directed RNA polymerase subunit beta'' (Liriodendron tulipifera (Tuliptree)).